Consider the following 371-residue polypeptide: Dihydroorotate dehydrogenase (quinone) (371 aa).

Residues 79–83 and threonine 103 contribute to the FMN site; that span reads AGFDK. Lysine 83 serves as a coordination point for substrate. 128–132 lines the substrate pocket; it reads NRMGF. FMN contacts are provided by asparagine 156 and asparagine 189. Asparagine 189 is a binding site for substrate. The Nucleophile role is filled by serine 192. Substrate is bound at residue asparagine 194. FMN-binding residues include lysine 225 and threonine 253. 254–255 is a binding site for substrate; the sequence is NT. FMN-binding positions include glycine 279, glycine 308, and 329–330; that span reads YT.

Belongs to the dihydroorotate dehydrogenase family. Type 2 subfamily. As to quaternary structure, monomer. Requires FMN as cofactor.

The protein resides in the cell membrane. The enzyme catalyses (S)-dihydroorotate + a quinone = orotate + a quinol. The protein operates within pyrimidine metabolism; UMP biosynthesis via de novo pathway; orotate from (S)-dihydroorotate (quinone route): step 1/1. In terms of biological role, catalyzes the conversion of dihydroorotate to orotate with quinone as electron acceptor. This is Dihydroorotate dehydrogenase (quinone) from Corynebacterium glutamicum (strain ATCC 13032 / DSM 20300 / JCM 1318 / BCRC 11384 / CCUG 27702 / LMG 3730 / NBRC 12168 / NCIMB 10025 / NRRL B-2784 / 534).